Consider the following 547-residue polypeptide: MKTKFIFITGGVLSSLGKGLAAASVGALLKARGLKVTIQKLDPYINVDPGTMNPFQHGEVYVTDDGAETDLDLGHYERYLAEPMSQKNNYTSGSIYHRVITKERRGDYLGGTVQVIPHVTDEIKNAVLSLAEDDPDVALIEIGGTVGDIEGLPFLEAIRQLRGDLGKDRCLYIHLTLVPYLRAAGEHKTKPTQHSVKELRSIGIQPDIILCRCEEAITADLKRKIALFCNVDQDAVFSAVDVKNIYEVPLRFYEEGFDQKIAIMLRLPAKNPNLEPWETLVDTCAHPQGRVTIGIVGKYVDLKEAYKSLHEALVHGGVANKVAVDLKYVNSEEITEENVAEALKGLDGILVPGGFGYRGVEGKILTIRYARENRVPFFGICLGMQCAVIEFARNVMGLEDANSEEFNELSKNKVIYLMTEWFDHRRQAVERRDSSSDKGGTMRLGSYPCVVVPDTKAHDAYGVKHIDERHRHRFEFNKAYFDAMAQSGMVFSGLSPDGELVEIVELPDHPWFLGCQFHPEFKSNPMQPHPLFREFIRAAKTHPAGKR.

An amidoligase domain region spans residues 1 to 267 (MKTKFIFITG…DQKIAIMLRL (267 aa)). CTP is bound at residue serine 14. UTP is bound at residue serine 14. ATP is bound by residues 15–20 (SLGKGL) and aspartate 72. Positions 72 and 141 each coordinate Mg(2+). CTP-binding positions include 148 to 150 (DIE), 188 to 193 (KTKPTQ), and lysine 224. UTP-binding positions include 188–193 (KTKPTQ) and lysine 224. A Glutamine amidotransferase type-1 domain is found at 292 to 545 (TIGIVGKYVD…IRAAKTHPAG (254 aa)). Residue glycine 354 coordinates L-glutamine. Residue cysteine 381 is the Nucleophile; for glutamine hydrolysis of the active site. L-glutamine-binding positions include 382-385 (LGMQ), glutamate 405, and arginine 473. Active-site residues include histidine 518 and glutamate 520.

The protein belongs to the CTP synthase family. In terms of assembly, homotetramer.

It catalyses the reaction UTP + L-glutamine + ATP + H2O = CTP + L-glutamate + ADP + phosphate + 2 H(+). It carries out the reaction L-glutamine + H2O = L-glutamate + NH4(+). The enzyme catalyses UTP + NH4(+) + ATP = CTP + ADP + phosphate + 2 H(+). Its pathway is pyrimidine metabolism; CTP biosynthesis via de novo pathway; CTP from UDP: step 2/2. Allosterically activated by GTP, when glutamine is the substrate; GTP has no effect on the reaction when ammonia is the substrate. The allosteric effector GTP functions by stabilizing the protein conformation that binds the tetrahedral intermediate(s) formed during glutamine hydrolysis. Inhibited by the product CTP, via allosteric rather than competitive inhibition. Functionally, catalyzes the ATP-dependent amination of UTP to CTP with either L-glutamine or ammonia as the source of nitrogen. Regulates intracellular CTP levels through interactions with the four ribonucleotide triphosphates. In Nitratidesulfovibrio vulgaris (strain DP4) (Desulfovibrio vulgaris), this protein is CTP synthase.